Reading from the N-terminus, the 510-residue chain is ATP synthase subunit alpha (510 aa).

171-178 (GDRQTGKT) contacts ATP.

It belongs to the ATPase alpha/beta chains family. In terms of assembly, F-type ATPases have 2 components, CF(1) - the catalytic core - and CF(0) - the membrane proton channel. CF(1) has five subunits: alpha(3), beta(3), gamma(1), delta(1), epsilon(1). CF(0) has three main subunits: a(1), b(2) and c(9-12). The alpha and beta chains form an alternating ring which encloses part of the gamma chain. CF(1) is attached to CF(0) by a central stalk formed by the gamma and epsilon chains, while a peripheral stalk is formed by the delta and b chains.

The protein resides in the cell inner membrane. The enzyme catalyses ATP + H2O + 4 H(+)(in) = ADP + phosphate + 5 H(+)(out). Functionally, produces ATP from ADP in the presence of a proton gradient across the membrane. The alpha chain is a regulatory subunit. The chain is ATP synthase subunit alpha from Phenylobacterium zucineum (strain HLK1).